Reading from the N-terminus, the 539-residue chain is Probable malate:quinone oxidoreductase (539 aa).

The protein belongs to the MQO family. FAD is required as a cofactor.

It catalyses the reaction (S)-malate + a quinone = a quinol + oxaloacetate. The protein operates within carbohydrate metabolism; tricarboxylic acid cycle; oxaloacetate from (S)-malate (quinone route): step 1/1. In Sodalis glossinidius (strain morsitans), this protein is Probable malate:quinone oxidoreductase.